Consider the following 509-residue polypeptide: Bestrophin-2a (509 aa).

Over 1–31 (MTVTYTARVANARFGGFSQLLLLWRGSIYKL) the chain is Cytoplasmic. Ala-10 lines the Ca(2+) pocket. Residues 32 to 51 (LWRELLCFLGFYMALSAAYR) traverse the membrane as a helical segment. The Extracellular segment spans residues 52-60 (FVLTEGQKR). Residues 61-82 (YFEKLVIYCDQYASLIPVSFVL) form a helical membrane-spanning segment. At 83–238 (GFYVTLVVNR…WISVPLVYTQ (156 aa)) the chain is on the cytoplasmic side. Residues 239–255 (VVTIALYSYFLACLIGR) form a helical membrane-spanning segment. Over 256–274 (QFLDPAQGYKDHDLDLCVP) the chain is Extracellular. The helical transmembrane segment at 275–288 (IFTLLQFFFYAGWL) threads the bilayer. Residues 289-509 (KVAEQLINPF…PIGEEEENLA (221 aa)) lie on the Cytoplasmic side of the membrane. Ca(2+)-binding residues include Gln-293, Asn-296, Asp-301, and Asp-304. The segment at 454–509 (DPGLPEPEAPPPAGPEPLTLIPGPVEPFSIVTMPGPRGPAPPWLPSPIGEEEENLA) is disordered. 2 stretches are compositionally biased toward pro residues: residues 457–468 (LPEPEAPPPAGP) and 489–498 (PRGPAPPWLP).

It belongs to the anion channel-forming bestrophin (TC 1.A.46) family. Calcium-sensitive chloride channel subfamily. In terms of assembly, pentamer. Interacts with GLUL; this interaction tethers a fraction of GLUL to the membrane, causing a decrease of cytosolic glutamine synthase (GS) activity and inhibits the chloride channel activity of BEST2 by affecting the gating at the aperture in the absence of intracellular glutamate. As to expression, mainly confined to the retinal pigment epithelium. Expressed in colon.

The protein localises to the cell membrane. Its subcellular location is the basolateral cell membrane. It catalyses the reaction chloride(in) = chloride(out). The enzyme catalyses hydrogencarbonate(in) = hydrogencarbonate(out). The catalysed reaction is L-glutamate(out) = L-glutamate(in). It carries out the reaction iodide(out) = iodide(in). It catalyses the reaction L-glutamine(out) = L-glutamine(in). With respect to regulation, chloride channel activity is allosterically inhibited by GLUL/glutamine synthase (GS) which affects the gating at the aperture in the absence of intracellular glutamate. Inhibitory effect of GLUL is relieved upon increasing of L-glutamate intracellular level. Ligand-gated anion channel that allows the movement of anions across cell membranes when activated by calcium (Ca2+). Transports a large specter of anions, namely mediates the movement of chloride, L-glutamate and iodide. Calcium-binding triggers the dilation of the aperture, but calcium-dependent gating is only effective when the size of the passing anion is bigger than the closed aperture. Mediates the calcium-activated hydrogencarbonate movement and participates in colonic hydrogencarbonate secretion concomitant with mucin secretion. In non-pigmented epithelium (NPE), mediates the efflux of intracellular L-glutamate; binding of intracellular L-glutamate activates and open both the neck and the aperture of the channel, leading to L-glutamate exit promoting chloride influx movement from the extracellular side in trans. Also exhibits a directional permeability for intracellular glutamine, in a similar manner as for L-glutamate. In Homo sapiens (Human), this protein is Bestrophin-2a.